The sequence spans 209 residues: Uracil phosphoribosyltransferase (209 aa).

5-phospho-alpha-D-ribose 1-diphosphate is bound by residues Arg-79, Arg-104, and 131–139 (DPMLATGGS). Residues Ile-194 and 199-201 (GDA) each bind uracil. Asp-200 serves as a coordination point for 5-phospho-alpha-D-ribose 1-diphosphate.

Belongs to the UPRTase family. It depends on Mg(2+) as a cofactor.

It carries out the reaction UMP + diphosphate = 5-phospho-alpha-D-ribose 1-diphosphate + uracil. Its pathway is pyrimidine metabolism; UMP biosynthesis via salvage pathway; UMP from uracil: step 1/1. With respect to regulation, allosterically activated by GTP. Functionally, catalyzes the conversion of uracil and 5-phospho-alpha-D-ribose 1-diphosphate (PRPP) to UMP and diphosphate. The polypeptide is Uracil phosphoribosyltransferase (Agathobacter rectalis (strain ATCC 33656 / DSM 3377 / JCM 17463 / KCTC 5835 / VPI 0990) (Eubacterium rectale)).